A 97-amino-acid polypeptide reads, in one-letter code: UPF0213 protein BLi00048/BL00536 (97 aa).

Residues 4–79 (NSHYFYVLSC…KKLSRKNKER (76 aa)) enclose the GIY-YIG domain.

It belongs to the UPF0213 family.

The sequence is that of UPF0213 protein BLi00048/BL00536 from Bacillus licheniformis (strain ATCC 14580 / DSM 13 / JCM 2505 / CCUG 7422 / NBRC 12200 / NCIMB 9375 / NCTC 10341 / NRRL NRS-1264 / Gibson 46).